The chain runs to 177 residues: Ribosome maturation factor RimM (177 aa).

Residues 96-177 (DNEFYWVDLI…KITVDWGLDY (82 aa)) enclose the PRC barrel domain.

Belongs to the RimM family. As to quaternary structure, binds ribosomal protein uS19.

The protein localises to the cytoplasm. An accessory protein needed during the final step in the assembly of 30S ribosomal subunit, possibly for assembly of the head region. Essential for efficient processing of 16S rRNA. May be needed both before and after RbfA during the maturation of 16S rRNA. It has affinity for free ribosomal 30S subunits but not for 70S ribosomes. The polypeptide is Ribosome maturation factor RimM (Herminiimonas arsenicoxydans).